We begin with the raw amino-acid sequence, 464 residues long: Asparagine--tRNA ligase (464 aa).

This sequence belongs to the class-II aminoacyl-tRNA synthetase family. In terms of assembly, homodimer.

Its subcellular location is the cytoplasm. The catalysed reaction is tRNA(Asn) + L-asparagine + ATP = L-asparaginyl-tRNA(Asn) + AMP + diphosphate + H(+). The sequence is that of Asparagine--tRNA ligase from Cytophaga hutchinsonii (strain ATCC 33406 / DSM 1761 / CIP 103989 / NBRC 15051 / NCIMB 9469 / D465).